The sequence spans 411 residues: MLNFKTLQAIDFQNKTVVLRSDFNVPMINGVISDSERILAGLDTIKFLVKKNCKIVLLSHLSRIKSLEDKLNNKKSLKPVAELLQQLLPTVKVQFSCKNTGAEVKQKVQALAFGEILLLENTRYCDVNDKGEIVKLESKNDPELAKFWASLGEIFVNDAFGTAHRKHASNAGIAKYVAKSCIGFLMEKELKNLSYLIQSPQKPFVVVLGGAKVSDKLKVVENLLKLADNILIGGGMVNTFLKAKGKATANSLVEKELIDVAKQILDKDTHNKIVLAIDQVMGSEFKDQTGITLDVSDKIQEQYQSYMSLDVGSKTIALFESYLKTAKTIFWNGPLGVFEFTNFAKGTSKIGEIIAKNKTAFSVIGGGDSAAAVKQMQLSDQFSFISTGGGASLALIGGEELVGISDIQKNS.

Substrate is bound by residues 22–24, arginine 37, 60–63, arginine 123, and arginine 165; these read DFN and HLSR. Residues lysine 216, glutamate 339, and 366 to 369 contribute to the ATP site; that span reads GGDS.

The protein belongs to the phosphoglycerate kinase family. As to quaternary structure, monomer.

Its subcellular location is the cytoplasm. The enzyme catalyses (2R)-3-phosphoglycerate + ATP = (2R)-3-phospho-glyceroyl phosphate + ADP. The protein operates within carbohydrate degradation; glycolysis; pyruvate from D-glyceraldehyde 3-phosphate: step 2/5. The sequence is that of Phosphoglycerate kinase (pgk) from Mycoplasma genitalium (strain ATCC 33530 / DSM 19775 / NCTC 10195 / G37) (Mycoplasmoides genitalium).